The chain runs to 431 residues: Transposase for insertion sequence element IS232 (431 aa).

The region spanning 20–79 (PNFKKLMGNLKMKINKSQLARELNVDRRTIDKYLNGFTPKGTKNKTSKIDTYYEVIAALL) is the HTH IS21-type domain. The H-T-H motif DNA-binding region spans 35–54 (KSQLARELNVDRRTIDKYLN). In terms of domain architecture, Integrase catalytic spans 140–315 (YETPPGEQAQ…IPVFALKQEK (176 aa)).

Belongs to the transposase IS21/IS408/IS1162 family.

Functionally, involved in the transposition of the insertion sequence. This is Transposase for insertion sequence element IS232 from Bacillus thuringiensis subsp. berliner.